A 231-amino-acid polypeptide reads, in one-letter code: Dephospho-CoA kinase domain-containing protein (231 aa).

The DPCK domain maps to 3–207 (LVGLTGGIAS…HSLEYLPLRL (205 aa)). An ATP-binding site is contributed by 8-15 (GGIASGKS).

The protein belongs to the CoaE family.

The sequence is that of Dephospho-CoA kinase domain-containing protein (DCAKD) from Bos taurus (Bovine).